Here is a 1067-residue protein sequence, read N- to C-terminus: Carbamoyl phosphate synthase large chain (1067 aa).

A carboxyphosphate synthetic domain region spans residues 1-401 (MPLNKDIKKV…AFLKGIRSLE (401 aa)). 12 residues coordinate ATP: R129, R169, G175, G176, K208, V210, E215, G241, I242, H243, Q284, and E298. In terms of domain architecture, ATP-grasp 1 spans 133–327 (RDMMNRINQP…IAKVAAKIAL (195 aa)). The Mg(2+) site is built by Q284, E298, and N300. Mn(2+)-binding residues include Q284, E298, and N300. Residues 402–549 (IGKYSLEHKK…YSTYEQYDEV (148 aa)) are oligomerization domain. Residues 550 to 932 (VVSDNKKVVV…ALYKGFVGAS (383 aa)) are carbamoyl phosphate synthetic domain. The ATP-grasp 2 domain maps to 674-864 (DDLLERLNIA…IVDIATRIML (191 aa)). ATP is bound by residues R710, K749, L751, E755, G780, V781, H782, S783, Q823, and E835. Mg(2+) contacts are provided by Q823, E835, and N837. Mn(2+) contacts are provided by Q823, E835, and N837. Residues 933–1067 (MYTGDKGKTI…NRELEVFNLI (135 aa)) enclose the MGS-like domain. Positions 933-1067 (MYTGDKGKTI…NRELEVFNLI (135 aa)) are allosteric domain.

Belongs to the CarB family. Composed of two chains; the small (or glutamine) chain promotes the hydrolysis of glutamine to ammonia, which is used by the large (or ammonia) chain to synthesize carbamoyl phosphate. Tetramer of heterodimers (alpha,beta)4. Mg(2+) is required as a cofactor. Mn(2+) serves as cofactor.

The catalysed reaction is hydrogencarbonate + L-glutamine + 2 ATP + H2O = carbamoyl phosphate + L-glutamate + 2 ADP + phosphate + 2 H(+). The enzyme catalyses hydrogencarbonate + NH4(+) + 2 ATP = carbamoyl phosphate + 2 ADP + phosphate + 2 H(+). It participates in amino-acid biosynthesis; L-arginine biosynthesis; carbamoyl phosphate from bicarbonate: step 1/1. It functions in the pathway pyrimidine metabolism; UMP biosynthesis via de novo pathway; (S)-dihydroorotate from bicarbonate: step 1/3. Functionally, large subunit of the glutamine-dependent carbamoyl phosphate synthetase (CPSase). CPSase catalyzes the formation of carbamoyl phosphate from the ammonia moiety of glutamine, carbonate, and phosphate donated by ATP, constituting the first step of 2 biosynthetic pathways, one leading to arginine and/or urea and the other to pyrimidine nucleotides. The large subunit (synthetase) binds the substrates ammonia (free or transferred from glutamine from the small subunit), hydrogencarbonate and ATP and carries out an ATP-coupled ligase reaction, activating hydrogencarbonate by forming carboxy phosphate which reacts with ammonia to form carbamoyl phosphate. In Clostridium perfringens (strain SM101 / Type A), this protein is Carbamoyl phosphate synthase large chain.